We begin with the raw amino-acid sequence, 700 residues long: MAQEVLTDLNKVRNIGIMAHIDAGKTTTTERILFYTGVNYKIGETHDGASTTDWMEQEKERGITITSAAVTCFWNNNQINIIDTPGHVDFTVEVERSLRVLDGAVAVFDGKEGVEPQSEQVWRQAAKYDVPRICFVNKMDKMGADFYFTVQTIIDRLGAKPLVLQLPIGAEDDFDGVVDLVEMKAVTWRGTVAIGAEPTIEEIPADLADKAAEYREKLLETVAESDEKLMEKYFAGEELSVEEIKGAIRKMTVNSELYPVLCGSAFKNKGVQPMLDAVIDYLPNPLDIGEVQGHALGNEEEILTRKPSKDEPFSALAFKIASHPFFGKLTFVRVYSGRIDPGAQVMNATKGKKERIGKLFQMHANKENPVDEAVAGHIYAMIGLKDTTTGDTLCAQDAPIVLESMSFPDPVIQVSIEPKTKSDQEKLGTAIQKLAEEDPTFSVELDEETGQTVIGGMGELHLDILVDRMRREFKVEANVGKPQVAYRETITKKVEKHDYTHKKQTGGSGQFAKVIIALEPFVGEDGATYEFENKVSGGRIPREYIPSVDAGAQDAMQYGVLAGYPLVNLKLSLLDGAYHDVDSSEMAFKVAGSQALKEAARKAGPVILEPLMAVEVTTPEEYMGDVIGDLNSRRGQIQAMEERSGARVVKALVPLSEMFGYIGDLRSKTQGRANFSMVFDSYAEVPANVSKEIIAKATGE.

The 277-residue stretch at 10–286 (NKVRNIGIMA…AVIDYLPNPL (277 aa)) folds into the tr-type G domain. GTP contacts are provided by residues 19–26 (AHIDAGKT), 83–87 (DTPGH), and 137–140 (NKMD).

This sequence belongs to the TRAFAC class translation factor GTPase superfamily. Classic translation factor GTPase family. EF-G/EF-2 subfamily.

Its subcellular location is the cytoplasm. In terms of biological role, catalyzes the GTP-dependent ribosomal translocation step during translation elongation. During this step, the ribosome changes from the pre-translocational (PRE) to the post-translocational (POST) state as the newly formed A-site-bound peptidyl-tRNA and P-site-bound deacylated tRNA move to the P and E sites, respectively. Catalyzes the coordinated movement of the two tRNA molecules, the mRNA and conformational changes in the ribosome. In Rhodococcus jostii (strain RHA1), this protein is Elongation factor G.